Consider the following 189-residue polypeptide: Peptidyl-tRNA hydrolase (189 aa).

Tyr-15 is a binding site for tRNA. Catalysis depends on His-20, which acts as the Proton acceptor. TRNA contacts are provided by Phe-66, Asn-68, and Asn-114.

This sequence belongs to the PTH family. As to quaternary structure, monomer.

The protein resides in the cytoplasm. The catalysed reaction is an N-acyl-L-alpha-aminoacyl-tRNA + H2O = an N-acyl-L-amino acid + a tRNA + H(+). In terms of biological role, hydrolyzes ribosome-free peptidyl-tRNAs (with 1 or more amino acids incorporated), which drop off the ribosome during protein synthesis, or as a result of ribosome stalling. Catalyzes the release of premature peptidyl moieties from peptidyl-tRNA molecules trapped in stalled 50S ribosomal subunits, and thus maintains levels of free tRNAs and 50S ribosomes. The chain is Peptidyl-tRNA hydrolase from Streptococcus pneumoniae (strain CGSP14).